The following is a 496-amino-acid chain: MELNCVQFLRNKTILVTGATGFLAKVFVEKILRVQPNVKKLYLLVRASDNEAATKRLRTEVFEKELFKVLRQNLGDEKLNTLLYEKVVSVPGDIATDQLGINDSHLRERMQKEIDIVVNVAATTNFDERYDVGLGINTFGALNVLNFAKKCVKVQLLLHVSTAYVCGEKPGLIPEKPFIMEEIRNENGLQLDINLERELMKQRLKELNEQDCSEEDITLSMKELGMERAKLHGWPNTYVFTKSMGEMLLGKHKENLPLVIIRPTMITSTLSEPFPGWIEGLRTVDSVIIAYGKGVLKCFLVDVNSVCDMIPVDMVANAMITAAAKHAGGSGVHMVYHVGSSHQNPVTFGEIHEIAVRYFTKNPLRSRNGSLITVSKVRFIPTMALFSLYMTLRYKLPLQLLKLVDIIYPWRNGDKYGDKNRKIELVMRLVELYEPYVLFKGIFDDRNTKSLCANQKEEEIKNTEKLMFDFDPKGINWGDYLTNIHISGLVTHVLKK.

Belongs to the fatty acyl-CoA reductase family. As to expression, expressed in the endodermal cell layer surrounding the central vasculature in roots. Expressed in floral organs of very young unopened buds and receptacle of siliques.

It catalyses the reaction a long-chain fatty acyl-CoA + 2 NADPH + 2 H(+) = a long-chain primary fatty alcohol + 2 NADP(+) + CoA. In terms of biological role, catalyzes the reduction of fatty acyl-CoA to fatty alcohols. Catalyzes specifically the formation of C18:0 fatty alcohol. Provides the fatty alcohols required for synthesis of suberin in roots, seed coat and wound-induced leaf tissue. Provides the fatty alcohols required for synthesis of alkyl hydroxycinnamates in root waxes. The polypeptide is Probable fatty acyl-CoA reductase 5 (Arabidopsis thaliana (Mouse-ear cress)).